A 502-amino-acid polypeptide reads, in one-letter code: Glycerol kinase (502 aa).

Thr14 is an ADP binding site. Residues Thr14, Thr15, and Ser16 each coordinate ATP. A sn-glycerol 3-phosphate-binding site is contributed by Thr14. Arg18 is a binding site for ADP. The sn-glycerol 3-phosphate site is built by Arg84, Glu85, and Tyr136. The glycerol site is built by Arg84, Glu85, and Tyr136. Position 232 is a phosphohistidine; by HPr (His232). Asp246 is a binding site for sn-glycerol 3-phosphate. Residues Asp246 and Gln247 each coordinate glycerol. ADP contacts are provided by Thr268 and Gly311. ATP-binding residues include Thr268, Gly311, Gln315, and Gly412. Residues Gly412 and Asn416 each coordinate ADP.

The protein belongs to the FGGY kinase family. In terms of assembly, homotetramer and homodimer (in equilibrium). In terms of processing, the phosphoenolpyruvate-dependent sugar phosphotransferase system (PTS), including enzyme I, and histidine-containing protein (HPr) are required for the phosphorylation, which leads to the activation of the enzyme.

It carries out the reaction glycerol + ATP = sn-glycerol 3-phosphate + ADP + H(+). It participates in polyol metabolism; glycerol degradation via glycerol kinase pathway; sn-glycerol 3-phosphate from glycerol: step 1/1. Activated by phosphorylation and inhibited by fructose 1,6-bisphosphate (FBP). Key enzyme in the regulation of glycerol uptake and metabolism. Catalyzes the phosphorylation of glycerol to yield sn-glycerol 3-phosphate. The sequence is that of Glycerol kinase from Streptococcus sanguinis (strain SK36).